Reading from the N-terminus, the 126-residue chain is Large ribosomal subunit protein bL19 (126 aa).

It belongs to the bacterial ribosomal protein bL19 family.

In terms of biological role, this protein is located at the 30S-50S ribosomal subunit interface and may play a role in the structure and function of the aminoacyl-tRNA binding site. The protein is Large ribosomal subunit protein bL19 of Bordetella bronchiseptica (strain ATCC BAA-588 / NCTC 13252 / RB50) (Alcaligenes bronchisepticus).